We begin with the raw amino-acid sequence, 93 residues long: Putative pterin-4-alpha-carbinolamine dehydratase (93 aa).

This sequence belongs to the pterin-4-alpha-carbinolamine dehydratase family.

It carries out the reaction (4aS,6R)-4a-hydroxy-L-erythro-5,6,7,8-tetrahydrobiopterin = (6R)-L-erythro-6,7-dihydrobiopterin + H2O. The polypeptide is Putative pterin-4-alpha-carbinolamine dehydratase (Roseiflexus sp. (strain RS-1)).